A 768-amino-acid polypeptide reads, in one-letter code: MATMLRLGARVSVSNSQILATSSVVSTIKTEELMNDHINSLCKSNFYREALEAFDFAQKNSSFKIRLRTYISLICACSSSRSLAQGRKIHDHILNSNCKYDTILNNHILSMYGKCGSLRDAREVFDFMPERNLVSYTSVITGYSQNGQGAEAIRLYLKMLQEDLVPDQFAFGSIIKACASSSDVGLGKQLHAQVIKLESSSHLIAQNALIAMYVRFNQMSDASRVFYGIPMKDLISWSSIIAGFSQLGFEFEALSHLKEMLSFGVFHPNEYIFGSSLKACSSLLRPDYGSQIHGLCIKSELAGNAIAGCSLCDMYARCGFLNSARRVFDQIERPDTASWNVIIAGLANNGYADEAVSVFSQMRSSGFIPDAISLRSLLCAQTKPMALSQGMQIHSYIIKWGFLADLTVCNSLLTMYTFCSDLYCCFNLFEDFRNNADSVSWNTILTACLQHEQPVEMLRLFKLMLVSECEPDHITMGNLLRGCVEISSLKLGSQVHCYSLKTGLAPEQFIKNGLIDMYAKCGSLGQARRIFDSMDNRDVVSWSTLIVGYAQSGFGEEALILFKEMKSAGIEPNHVTFVGVLTACSHVGLVEEGLKLYATMQTEHGISPTKEHCSCVVDLLARAGRLNEAERFIDEMKLEPDVVVWKTLLSACKTQGNVHLAQKAAENILKIDPFNSTAHVLLCSMHASSGNWENAALLRSSMKKHDVKKIPGQSWIEIEDKIHIFFAEDIFHPERDDIYTVLHNIWSQMLDECNPQHKKRLQFIHETG.

The transit peptide at 1–70 (MATMLRLGAR…SSFKIRLRTY (70 aa)) directs the protein to the mitochondrion. PPR repeat units follow at residues 30 to 60 (TEELMNDHINSLCKSNFYREALEAFDFAQKN), 66 to 100 (RLRTYISLICACSSSRSLAQGRKIHDHILNSNCKY), 101 to 131 (DTILNNHILSMYGKCGSLRDAREVFDFMPER), 132 to 166 (NLVSYTSVITGYSQNGQGAEAIRLYLKMLQEDLVP), 167 to 201 (DQFAFGSIIKACASSSDVGLGKQLHAQVIKLESSS), 202 to 232 (HLIAQNALIAMYVRFNQMSDASRVFYGIPMK), 233 to 267 (DLISWSSIIAGFSQLGFEFEALSHLKEMLSFGVFH), 269 to 303 (NEYIFGSSLKACSSLLRPDYGSQIHGLCIKSELAG), 304 to 334 (NAIAGCSLCDMYARCGFLNSARRVFDQIERP), 335 to 369 (DTASWNVIIAGLANNGYADEAVSVFSQMRSSGFIP), 370 to 404 (DAISLRSLLCAQTKPMALSQGMQIHSYIIKWGFLA), 405 to 435 (DLTVCNSLLTMYTFCSDLYCCFNLFEDFRNN), 437 to 471 (DSVSWNTILTACLQHEQPVEMLRLFKLMLVSECEP), 472 to 506 (DHITMGNLLRGCVEISSLKLGSQVHCYSLKTGLAP), 507 to 537 (EQFIKNGLIDMYAKCGSLGQARRIFDSMDNR), 538 to 572 (DVVSWSTLIVGYAQSGFGEEALILFKEMKSAGIEP), 573 to 608 (NHVTFVGVLTACSHVGLVEEGLKLYATMQTEHGISP), and 609 to 639 (TKEHCSCVVDLLARAGRLNEAERFIDEMKLE). The type E motif stretch occupies residues 644–719 (VWKTLLSACK…IPGQSWIEIE (76 aa)). Residues 720–750 (DKIHIFFAEDIFHPERDDIYTVLHNIWSQML) are type E(+) motif.

Belongs to the PPR family. PCMP-E subfamily.

The protein resides in the mitochondrion. This chain is Pentatricopeptide repeat-containing protein At3g53360, mitochondrial (PCMP-E86), found in Arabidopsis thaliana (Mouse-ear cress).